A 465-amino-acid chain; its full sequence is UDP-N-acetylmuramoylalanine--D-glutamate ligase (465 aa).

Residue 116–122 (GTNGKTT) participates in ATP binding.

This sequence belongs to the MurCDEF family.

It is found in the cytoplasm. The enzyme catalyses UDP-N-acetyl-alpha-D-muramoyl-L-alanine + D-glutamate + ATP = UDP-N-acetyl-alpha-D-muramoyl-L-alanyl-D-glutamate + ADP + phosphate + H(+). It participates in cell wall biogenesis; peptidoglycan biosynthesis. Cell wall formation. Catalyzes the addition of glutamate to the nucleotide precursor UDP-N-acetylmuramoyl-L-alanine (UMA). This chain is UDP-N-acetylmuramoylalanine--D-glutamate ligase, found in Thermobifida fusca (strain YX).